The chain runs to 96 residues: Antitoxin ParD4 (96 aa).

The protein belongs to the ParD antitoxin family.

Its function is as follows. Antitoxin component of a type II toxin-antitoxin (TA) system. Neutralizes the effect of cognate toxin ParE4, but no other RelE or ParE toxin. This chain is Antitoxin ParD4 (parD4), found in Caulobacter vibrioides (strain ATCC 19089 / CIP 103742 / CB 15) (Caulobacter crescentus).